Here is a 139-residue protein sequence, read N- to C-terminus: MSLTRHEIREKAFQALFALNANPDADENQLFQQLLNPEETDAVEIPAYLSTLVTGVREHQVELDAQIQPYLSQKWSLDRLAKTDLIILRIAFFELQFVDDVPTKVAVNEAIELTKAFSDDRSRKFVSGVLGKVVKNQAN.

Belongs to the NusB family.

Functionally, involved in transcription antitermination. Required for transcription of ribosomal RNA (rRNA) genes. Binds specifically to the boxA antiterminator sequence of the ribosomal RNA (rrn) operons. This chain is Transcription antitermination protein NusB, found in Lactiplantibacillus plantarum (strain ATCC BAA-793 / NCIMB 8826 / WCFS1) (Lactobacillus plantarum).